Here is a 1063-residue protein sequence, read N- to C-terminus: Retinoblastoma-like protein 1 (1063 aa).

A phosphothreonine mark is found at Thr-332, Thr-369, and Thr-385. The tract at residues 383–584 (VTTPVASATQ…WEALHASANR (202 aa)) is domain A. A pocket; binds T and E1A region spans residues 383 to 944 (VTTPVASATQ…GRVKSFALKY (562 aa)). Residues 585–779 (VPSCEEVIFP…AQDAHLTGVS (195 aa)) form a spacer region. 4 positions are modified to phosphoserine: Ser-640, Ser-650, Ser-748, and Ser-761. A domain B region spans residues 780-944 (KPKRTGSLAL…GRVKSFALKY (165 aa)). A phosphoserine mark is found at Ser-959, Ser-970, and Ser-983. Residue Thr-992 is modified to Phosphothreonine. Phosphoserine is present on residues Ser-1004 and Ser-1036.

Belongs to the retinoblastoma protein (RB) family. In terms of assembly, component of the DREAM complex (also named LINC complex) at least composed of E2F4, E2F5, LIN9, LIN37, LIN52, LIN54, MYBL1, MYBL2, RBL1, RBL2, RBBP4, TFDP1 and TFDP2. The complex exists in quiescent cells where it represses cell cycle-dependent genes. It dissociates in S phase when LIN9, LIN37, LIN52 and LIN54 form a subcomplex that binds to MYBL2. Interacts with AATF. Interacts with KDM5A. Interacts with KMT5B and KMT5C. Interacts with USP4. Interacts with RBBP9. Post-translationally, cell-cycle arrest properties are inactivated by phosphorylation on Thr-332, Ser-640, Ser-959 and Ser-970 by CDK4. As to expression, highly expressed in fetal heart and liver. Expressed at low levels in all other fetal tissues except skeletal muscle. High levels in neonatal spleen and thymus with low levels in other tissues. In adult, highly expressed in testis. Barely detectable in other tissues.

It localises to the nucleus. In terms of biological role, key regulator of entry into cell division. Directly involved in heterochromatin formation by maintaining overall chromatin structure and, in particular, that of constitutive heterochromatin by stabilizing histone methylation. Recruits and targets histone methyltransferases KMT5B and KMT5C, leading to epigenetic transcriptional repression. Controls histone H4 'Lys-20' trimethylation. Probably acts as a transcription repressor by recruiting chromatin-modifying enzymes to promoters. Potent inhibitor of E2F-mediated trans-activation. May act as a tumor suppressor. The sequence is that of Retinoblastoma-like protein 1 (Rbl1) from Mus musculus (Mouse).